The chain runs to 475 residues: ESX-3 secretion system protein EccD3 (475 aa).

11 helical membrane passes run 132–152 (IARGAALALIGLILVGTGLSV), 161–181 (LLGQFIVSGIALATVIAALAV), 186–206 (AVLATSLAVTALVPVAAAFAL), 212–232 (FGAPNVLLAAAGVAAWSLISM), 241–261 (IAVFTATAVTGVGVLLVAGAA), 264–284 (WVISSDVIGCALVLLGLIVTV), 333–353 (GVIAAGVLLGVAGSVALVSSA), 354–374 (NASPWAWYIVVAAAAGAALRA), 384–404 (AWLLGHSYLLAVALLVAFVIG), 409–429 (AALWALAALAVLVLVWIVAAL), and 453–473 (GLDASLIPVMALLVGLFSLVL).

It belongs to the EccD/Snm4 family. In terms of assembly, part of the ESX-3 / type VII secretion system (T7SS), which is composed of cytosolic and membrane components. The ESX-3 membrane complex is composed of EccB3, EccC3, EccD3 and EccE3.

The protein resides in the cell inner membrane. Its function is as follows. Part of the ESX-3 specialized secretion system, which is required for siderophore-mediated iron acquisition and for the secretion of EsxH and EsxG. This is ESX-3 secretion system protein EccD3 from Mycolicibacterium smegmatis (strain ATCC 700084 / mc(2)155) (Mycobacterium smegmatis).